The following is a 1524-amino-acid chain: MAAVYSGISLKLKSKTTSWEDKLKLAHFAWISHQCFLPNKEQVLLDWARQSLVAFYKKKLELKEDIVERLWIYIDNILHSRKLQNLLKNGKTINLQISLVKIINERVAEFSLSGSQRNICAVLRCCQGILSTPALAVIYTAKQELMVALLSQLCWSACRQPEGAVVAQLFEVIHLALGHYLLILQQQVNPRRAFGDVTAHLLQPCLVLRHLLSGGTWTQAGQGQLRQVLSRDIRSQIEAMFRGGIFQPELLSSYKEGLLDQQQGDVKTGAMKNLLAPMDTVLNRLVDAGYCAASLHTSVVANSVALLYKLFLDSYFKEGNQLLCFQVLPRLFGCLKISHLQEEQSKALSTSDWTTELLVVEQLLNSVANNNIYNIAADRIRHEEAQFRFYRHVAELLINHAQAPIPAWFRCLKTLISLNHLILEPDLDDLLASAWIDAEVTEFRTKKAQEALIRTVFQTYAKLRQVPRLFEEVLGVICRPAAEALRQPVLASGPSTVLSACLLELPPSQILDTWSLVLEKFQSLVLPYLQSDADMALKSLSLSLLLHCIMFNMRSLDSSTPLPIVRRTQCMMERMMRELVQPLLALLPDTPGPEPELWLQKVSDSVLLLSYTWAQVDAMFSLNCSQYHSMSGPLIGVALEISNLPSLLPGVKTQHWKKIEKFTAQFSSLGTYCLEQLYLQKMKRTLMQTSFRSEGAIQSLRCDAAFIIGSGRKSLNQRTTASWDGQVGMVSGLTYPVAHWHLIVSNLTILISYLCPDDVGYLASVLLRTLPMGKAQEVSIDEEAYITLEKISKAFLHSPLFPEMQSLHSAFLTCVTTSCSSILCSGAQRDSGLVSQQLPWLFEKDHMVVGHWENRFAKAGPEGIEPRGEIAQNLLSLVKSDFPIQLEGEQLESILGLLEVISALQLDSLLPPYHVHYFLVLLSMAVTKLGCSCSSSLALKFLTTCYQLLGYLQKGKSARSVFKIMYGSDIFEVVLTSLFRASSRFLIEMDDPAWLEFLQVIGTFLEELMQMLIQMKLSLVLNFRKITAFLSSSKPYTEAASSKQLENQNPQGRQLLLVSLTRLCHVLGPFLKEQKLGQEAPAALSELLQQVVLQTGAVLQLCSVPGARGWRLPSVLISSVSTLLEADLGQHCRDGGADISQGSDRTLLSHVALYQGVYSQILLELPALAGHDQSFQAALQFLTLFFLAPELHPKKDSVFTSMFHSVRRVLADPEIPVQVTQDIEPHLGALFTQMLEVGTTEDLRLVMQCILQGLDVSNMWKADVQAVVSAVTLLRLLLNCPLSGEKASLLWRACPQIVTALTLLNREASQEQPVSLTVVGPVLDVLAALLRQGEEAIGNPHHVSLAFSILLTVPLDHLKPLEYGSVFPRLHNVLFSILQCHPKVMLKAIPSFLNSFNRLVFSVMREGRQKDKGSIDDLPTVLKCARLVERMYSHIAARAEEFAVFSPFMVAQYVLEVQKVTLYPAVKSLLQEGIYLILDLCIEPDVQFLRASLQPGMRDIFKELYNDYLKYHKAKHEGEKRYTA.

It is found in the nucleus. The protein localises to the nucleolus. Functionally, essential for hematopietic stem cell development through the regulation of p53/TP53 pathway. The sequence is that of Unhealthy ribosome biogenesis protein 2 homolog (URB2) from Homo sapiens (Human).